The following is an 855-amino-acid chain: Oxysterol-binding protein-related protein 3 (855 aa).

The segment at 1 to 32 is disordered; that stretch reads MSDEKNLGVSQKLVSPSRSTSSCSSKQGSRQD. A phosphoserine mark is found at S15 and S33. A compositionally biased stretch (low complexity) spans 15-31; it reads SPSRSTSSCSSKQGSRQ. Residues 50–145 form the PH domain; the sequence is PPVQKGFLLK…WVSKLRHHRM (96 aa). Residues 161–167 carry the FFAT 1 motif; that stretch reads FFSGSSV. 10 positions are modified to phosphoserine: S199, S250, S272, S277, S288, S291, S340, S393, S405, and S408. Positions 274-293 are disordered; that stretch reads PNLSTLDFGEEKSYSDGSEA. The interval 377–396 is disordered; it reads DPPAVPKPGDNLAEENSRDE. Positions 450–454 match the FFAT 2 motif; it reads LSLDN. Positions 468 to 490 are disordered; it reads PVLESSGEARSKRRTSLPAPGPN.

Belongs to the OSBP family. In terms of assembly, homodimer. Interacts with RRAS. Interacts (phosphorylated form) with VAPA. Interacts with OSBPL6. Post-translationally, phosphorylation is enhanced in vitro by phorbol-12-myristate-13-acetate (PMA), forskolin and calcium ionophore A23187. Phosphorylation seems to be stimulated in conditions of low cell-cell (or cell-matrix) adhesion. In terms of tissue distribution, expressed in spinal ganglia. Expressed in a subset of small lymphocytes (at protein level).

It localises to the endoplasmic reticulum membrane. The protein resides in the cytoplasm. It is found in the cytosol. Its subcellular location is the cell membrane. The protein localises to the cell projection. It localises to the filopodium tip. The protein resides in the nucleus membrane. Its function is as follows. Phosphoinositide-binding protein which associates with both cell and endoplasmic reticulum (ER) membranes. Can bind to the ER membrane protein VAPA and recruit VAPA to plasma membrane sites, thus linking these intracellular compartments. The ORP3-VAPA complex stimulates RRAS signaling which in turn attenuates integrin beta-1 (ITGB1) activation at the cell surface. With VAPA, may regulate ER morphology. Has a role in regulation of the actin cytoskeleton, cell polarity and cell adhesion. Binds to phosphoinositides with preference for PI(3,4)P2 and PI(3,4,5)P3. Also binds 25-hydroxycholesterol and cholesterol. The polypeptide is Oxysterol-binding protein-related protein 3 (Osbpl3) (Mus musculus (Mouse)).